Reading from the N-terminus, the 24-residue chain is Flavin reductase (NADPH) (24 aa).

Residues glycine 9, threonine 11, glycine 12, and threonine 14 each contribute to the NADP(+) site.

This sequence belongs to the BLVRB family. In terms of assembly, monomer. As to expression, detected in erythrocytes (at protein level).

It localises to the cytoplasm. The enzyme catalyses reduced riboflavin + NADP(+) = riboflavin + NADPH + 2 H(+). The catalysed reaction is bilirubin IXbeta + NADP(+) = biliverdin IXbeta + NADPH + H(+). It catalyses the reaction FMNH2 + NAD(+) = FMN + NADH + 2 H(+). It carries out the reaction FMNH2 + NADP(+) = FMN + NADPH + 2 H(+). The enzyme catalyses S-nitroso-CoA + L-cysteinyl-[protein] = S-nitroso-L-cysteinyl-[protein] + CoA. The catalysed reaction is L-cysteinyl-[SCAN] + S-nitroso-CoA = S-nitroso-L-cysteinyl-[SCAN] + CoA. It catalyses the reaction S-nitroso-L-cysteinyl-[SCAN] + L-cysteinyl-[protein] = L-cysteinyl-[SCAN] + S-nitroso-L-cysteinyl-[protein]. Its function is as follows. Enzyme that can both act as a NAD(P)H-dependent reductase and a S-nitroso-CoA-dependent nitrosyltransferase. Promotes fetal heme degradation during development. Also expressed in adult tissues, where it acts as a regulator of hematopoiesis, intermediary metabolism (glutaminolysis, glycolysis, TCA cycle and pentose phosphate pathway) and insulin signaling. Has a broad specificity oxidoreductase activity by catalyzing the NAD(P)H-dependent reduction of a variety of flavins, such as riboflavin, FAD or FMN, biliverdins, methemoglobin and PQQ (pyrroloquinoline quinone). Contributes to fetal heme catabolism by catalyzing reduction of biliverdin IXbeta into bilirubin IXbeta in the liver. Biliverdin IXbeta, which constitutes the major heme catabolite in the fetus is not present in adult. Does not reduce bilirubin IXalpha. Can also reduce the complexed Fe(3+) iron to Fe(2+) in the presence of FMN and NADPH. Acts as a protein nitrosyltransferase by catalyzing nitrosylation of cysteine residues of target proteins, such as HMOX2, INSR and IRS1. S-nitroso-CoA-dependent nitrosyltransferase activity is mediated via a 'ping-pong' mechanism: BLVRB first associates with both S-nitroso-CoA and protein substrate, nitric oxide group is then transferred from S-nitroso-CoA to Cys residues of BLVRB and from S-nitroso-BLVRB to the protein substrate. Inhibits insulin signaling by mediating nitrosylation of INSR and IRS1, leading to their inhibition. This chain is Flavin reductase (NADPH) (BLVRB), found in Aquarana catesbeiana (American bullfrog).